The sequence spans 401 residues: MKDKIVLAYSGGLDTSVAVQWLIDKGYDVVACCLDVGEGKDLDVVYQKALDMGAVECHIIDATKEFSDDYVSYAIKGNLMYENAYPLVSALSRPLIAKKLVEIAEKTNSIGIAHGCTGKGNDQVRFEVAIKALNPKLKAFAPVREWAWSREEEIDYAIKHNIPVSINYDSPYSIDQNLWGRANECGILEDPYAAPPEDAFDLTTPLEETPDNADEIILTFKQGIPVQVDGKDYQLDDLILYLNQLAGKHGIGRIDHVENRMVGIKSREIYETPGAEVILKAHKALETITLTKDVAHFKPVIEKQFSEQIYNGLWFSPLTDSLKLFIDSTQQYVEGDVRIKLFKGNAIVNGRQSPYTLYDEKLATYTKEDAFNQESAVGFIDIYGLPTQVNALLHGGYSNEQ.

An ATP-binding site is contributed by 8–16 (AYSGGLDTS). Tyr85 is an L-citrulline binding site. Gly115 is a binding site for ATP. Residues Thr117, Asn121, and Asp122 each coordinate L-aspartate. Residue Asn121 coordinates L-citrulline. L-citrulline is bound by residues Arg125, Ser173, Glu258, and Tyr270.

The protein belongs to the argininosuccinate synthase family. Type 1 subfamily. In terms of assembly, homotetramer.

It localises to the cytoplasm. The enzyme catalyses L-citrulline + L-aspartate + ATP = 2-(N(omega)-L-arginino)succinate + AMP + diphosphate + H(+). The protein operates within amino-acid biosynthesis; L-arginine biosynthesis; L-arginine from L-ornithine and carbamoyl phosphate: step 2/3. The protein is Argininosuccinate synthase of Staphylococcus epidermidis (strain ATCC 35984 / DSM 28319 / BCRC 17069 / CCUG 31568 / BM 3577 / RP62A).